A 260-amino-acid polypeptide reads, in one-letter code: Hydroxyethylthiazole kinase 1 (260 aa).

Residue Met39 participates in substrate binding. ATP is bound by residues Arg115 and Thr160. Gly187 is a substrate binding site.

Belongs to the Thz kinase family. Mg(2+) serves as cofactor.

The enzyme catalyses 5-(2-hydroxyethyl)-4-methylthiazole + ATP = 4-methyl-5-(2-phosphooxyethyl)-thiazole + ADP + H(+). The protein operates within cofactor biosynthesis; thiamine diphosphate biosynthesis; 4-methyl-5-(2-phosphoethyl)-thiazole from 5-(2-hydroxyethyl)-4-methylthiazole: step 1/1. Its function is as follows. Catalyzes the phosphorylation of the hydroxyl group of 4-methyl-5-beta-hydroxyethylthiazole (THZ). This is Hydroxyethylthiazole kinase 1 from Streptococcus pneumoniae serotype 4 (strain ATCC BAA-334 / TIGR4).